The primary structure comprises 466 residues: tRNA modification GTPase MnmE (466 aa).

Residues Arg-23, Glu-86, and Lys-125 each coordinate (6S)-5-formyl-5,6,7,8-tetrahydrofolate. The region spanning 221–388 (GIPVAIVGEP…LKNELLSFVN (168 aa)) is the TrmE-type G domain. Asn-231 serves as a coordination point for K(+). Residues 231-236 (NVGKST), 250-256 (SDIAGTT), and 275-278 (DTAG) each bind GTP. Mg(2+) is bound at residue Ser-235. Ser-250, Ile-252, and Thr-255 together coordinate K(+). Thr-256 provides a ligand contact to Mg(2+). Residue Lys-466 coordinates (6S)-5-formyl-5,6,7,8-tetrahydrofolate.

The protein belongs to the TRAFAC class TrmE-Era-EngA-EngB-Septin-like GTPase superfamily. TrmE GTPase family. Homodimer. Heterotetramer of two MnmE and two MnmG subunits. It depends on K(+) as a cofactor.

It is found in the cytoplasm. Its function is as follows. Exhibits a very high intrinsic GTPase hydrolysis rate. Involved in the addition of a carboxymethylaminomethyl (cmnm) group at the wobble position (U34) of certain tRNAs, forming tRNA-cmnm(5)s(2)U34. The sequence is that of tRNA modification GTPase MnmE from Flavobacterium johnsoniae (strain ATCC 17061 / DSM 2064 / JCM 8514 / BCRC 14874 / CCUG 350202 / NBRC 14942 / NCIMB 11054 / UW101) (Cytophaga johnsonae).